Reading from the N-terminus, the 252-residue chain is MKYIYNFLLMIQFLTRIPVKRSLPCEKEDFRRGAAMLPLIGLIVGCIQWVVFYILSKIFPANITAIFIILVGMVLIGGLHQDGLGDIFDGFFSFKGDKEKIIEIMKDSRVGTFAVLALIFDILIKYSALSFIIENNMSYAIIITPIMSRCTLVFLFLIGKNAKKNGTGNLFIENVSVKEFIISFIFMIVPSVLLIGYKYSVIIIVVSFIITLAFLNLCNRKIGGITGDCLGANNEIVEMFTMLVFVALLYIN.

Transmembrane regions (helical) follow at residues A35–L55, I58–G78, F113–I133, Y139–G159, L170–P190, V192–L212, and G231–I251.

The protein belongs to the CobS family. Requires Mg(2+) as cofactor.

Its subcellular location is the cell membrane. The enzyme catalyses alpha-ribazole + adenosylcob(III)inamide-GDP = adenosylcob(III)alamin + GMP + H(+). It catalyses the reaction alpha-ribazole 5'-phosphate + adenosylcob(III)inamide-GDP = adenosylcob(III)alamin 5'-phosphate + GMP + H(+). The protein operates within cofactor biosynthesis; adenosylcobalamin biosynthesis; adenosylcobalamin from cob(II)yrinate a,c-diamide: step 7/7. Functionally, joins adenosylcobinamide-GDP and alpha-ribazole to generate adenosylcobalamin (Ado-cobalamin). Also synthesizes adenosylcobalamin 5'-phosphate from adenosylcobinamide-GDP and alpha-ribazole 5'-phosphate. This Clostridium tetani (strain Massachusetts / E88) protein is Adenosylcobinamide-GDP ribazoletransferase.